The following is a 118-amino-acid chain: Ribonuclease P protein component (118 aa).

Belongs to the RnpA family. As to quaternary structure, consists of a catalytic RNA component (M1 or rnpB) and a protein subunit.

It catalyses the reaction Endonucleolytic cleavage of RNA, removing 5'-extranucleotides from tRNA precursor.. Functionally, RNaseP catalyzes the removal of the 5'-leader sequence from pre-tRNA to produce the mature 5'-terminus. It can also cleave other RNA substrates such as 4.5S RNA. The protein component plays an auxiliary but essential role in vivo by binding to the 5'-leader sequence and broadening the substrate specificity of the ribozyme. The chain is Ribonuclease P protein component from Shewanella sp. (strain ANA-3).